The following is a 60-amino-acid chain: Large ribosomal subunit protein bL33 (60 aa).

Belongs to the bacterial ribosomal protein bL33 family.

This chain is Large ribosomal subunit protein bL33, found in Cytophaga hutchinsonii (strain ATCC 33406 / DSM 1761 / CIP 103989 / NBRC 15051 / NCIMB 9469 / D465).